Consider the following 168-residue polypeptide: Ubiquitin-conjugating enzyme E2 7 (168 aa).

The tract at residues 1–21 (MATAPARRASSSRSSSEISRT) is disordered. A UBC core domain is found at 6 to 166 (ARRASSSRSS…VRRAVRKSQE (161 aa)). Residue cysteine 92 is the Glycyl thioester intermediate of the active site.

This sequence belongs to the ubiquitin-conjugating enzyme family.

It catalyses the reaction S-ubiquitinyl-[E1 ubiquitin-activating enzyme]-L-cysteine + [E2 ubiquitin-conjugating enzyme]-L-cysteine = [E1 ubiquitin-activating enzyme]-L-cysteine + S-ubiquitinyl-[E2 ubiquitin-conjugating enzyme]-L-cysteine.. The protein operates within protein modification; protein ubiquitination. Its function is as follows. Catalyzes the covalent attachment of ubiquitin to other proteins so as to signal them for selective protein degradation. Involved in the formation of multiubiquitin chains. This Triticum aestivum (Wheat) protein is Ubiquitin-conjugating enzyme E2 7 (UBC7).